A 445-amino-acid chain; its full sequence is Glutamate--tRNA ligase 1 (445 aa).

Positions P10 to N20 match the 'HIGH' region motif. The 'KMSKS' region signature appears at K240 to R244. K243 lines the ATP pocket.

Belongs to the class-I aminoacyl-tRNA synthetase family. Glutamate--tRNA ligase type 1 subfamily. In terms of assembly, monomer.

It localises to the cytoplasm. The catalysed reaction is tRNA(Glu) + L-glutamate + ATP = L-glutamyl-tRNA(Glu) + AMP + diphosphate. Its function is as follows. Catalyzes the attachment of glutamate to tRNA(Glu) in a two-step reaction: glutamate is first activated by ATP to form Glu-AMP and then transferred to the acceptor end of tRNA(Glu). This Rickettsia bellii (strain OSU 85-389) protein is Glutamate--tRNA ligase 1.